The following is a 575-amino-acid chain: Sclareol synthase, chloroplastic (575 aa).

The N-terminal 51 residues, methionine 1–methionine 51, are a transit peptide targeting the chloroplast. Mg(2+) contacts are provided by aspartate 329, aspartate 333, asparagine 473, serine 477, and glutamate 481. Residues aspartate 329–aspartate 333 carry the DDXXD motif motif.

Belongs to the terpene synthase family.

Its subcellular location is the plastid. The protein resides in the chloroplast. It carries out the reaction 8-hydroxycopalyl diphosphate + H2O = sclareol + diphosphate. The protein operates within secondary metabolite biosynthesis; terpenoid biosynthesis. Involved in the biosynthesis of labdane-type diterpenoid including sclareol, a diterpene-diol that is used as fragrance and flavoring, and has anticancer effects (able to kill leukemic and colon cancer cells by apoptosis). Sclareol can also be used as synthesis precursor of ambergris substitution fragance products such as ambrox. Terpene synthase that catalyzes the conversion of 8-hydroxy-copalyl diphosphate to sclareol. This Salvia sclarea (Clary sage) protein is Sclareol synthase, chloroplastic.